Consider the following 85-residue polypeptide: uncharacterized protein (85 aa).

2 helical membrane passes run 20-42 (IYWF…TTFL) and 52-69 (IILR…KHYY).

Its subcellular location is the membrane. This is an uncharacterized protein from Saccharomyces cerevisiae (strain ATCC 204508 / S288c) (Baker's yeast).